Consider the following 355-residue polypeptide: uncharacterized protein (355 aa).

Disordered regions lie at residues 1–121 (MPID…MELR), 226–253 (RLMN…KSSM), and 336–355 (NLHR…RKRT). Residues 24–37 (LESESSSESDYEEV) are compositionally biased toward acidic residues. The span at 65 to 87 (ETKTSSNFQNINPVQTIDNSASE) shows a compositional bias: polar residues. The segment covering 91–105 (DASSAEGGSNSAASS) has biased composition (low complexity). The segment covering 106-117 (SEEEDSSDSEYE) has biased composition (acidic residues). The span at 226–245 (RLMNSEEREAQDLKDAEASR) shows a compositional bias: basic and acidic residues.

This is an uncharacterized protein from Schizosaccharomyces pombe (strain 972 / ATCC 24843) (Fission yeast).